A 467-amino-acid chain; its full sequence is Chromosomal replication initiator protein DnaA (467 aa).

Residues 1–90 (MSLSLWQQCL…KPVTQTPQAA (90 aa)) form a domain I, interacts with DnaA modulators region. A domain II region spans residues 91–130 (VTSNVAAPAQVAQTQPQRAAPSMRSGWDNVPAPAEPTYRS). A domain III, AAA+ region region spans residues 131 to 347 (NVNVKHTFDN…GALNRVIANA (217 aa)). ATP contacts are provided by glycine 175, glycine 177, lysine 178, and threonine 179. The tract at residues 348–467 (NFTGRAITID…FSNLIRTLSS (120 aa)) is domain IV, binds dsDNA.

The protein belongs to the DnaA family. In terms of assembly, oligomerizes as a right-handed, spiral filament on DNA at oriC.

Its subcellular location is the cytoplasm. Functionally, plays an essential role in the initiation and regulation of chromosomal replication. ATP-DnaA binds to the origin of replication (oriC) to initiate formation of the DNA replication initiation complex once per cell cycle. Binds the DnaA box (a 9 base pair repeat at the origin) and separates the double-stranded (ds)DNA. Forms a right-handed helical filament on oriC DNA; dsDNA binds to the exterior of the filament while single-stranded (ss)DNA is stabiized in the filament's interior. The ATP-DnaA-oriC complex binds and stabilizes one strand of the AT-rich DNA unwinding element (DUE), permitting loading of DNA polymerase. After initiation quickly degrades to an ADP-DnaA complex that is not apt for DNA replication. Binds acidic phospholipids. In Escherichia coli (strain ATCC 8739 / DSM 1576 / NBRC 3972 / NCIMB 8545 / WDCM 00012 / Crooks), this protein is Chromosomal replication initiator protein DnaA.